A 283-amino-acid polypeptide reads, in one-letter code: 4-diphosphocytidyl-2-C-methyl-D-erythritol kinase (283 aa).

Lysine 10 is a catalytic residue. Residue 99–109 (PMGGGLGGGSS) participates in ATP binding. Aspartate 141 is a catalytic residue.

Belongs to the GHMP kinase family. IspE subfamily. In terms of assembly, homodimer.

It carries out the reaction 4-CDP-2-C-methyl-D-erythritol + ATP = 4-CDP-2-C-methyl-D-erythritol 2-phosphate + ADP + H(+). It participates in isoprenoid biosynthesis; isopentenyl diphosphate biosynthesis via DXP pathway; isopentenyl diphosphate from 1-deoxy-D-xylulose 5-phosphate: step 3/6. Functionally, catalyzes the phosphorylation of the position 2 hydroxy group of 4-diphosphocytidyl-2C-methyl-D-erythritol. The sequence is that of 4-diphosphocytidyl-2-C-methyl-D-erythritol kinase from Salmonella enteritidis PT4 (strain P125109).